The chain runs to 76 residues: Esculentin-2-ALb (76 aa).

An N-terminal signal peptide occupies residues 1–22 (MFTMKKSLLLLFFLGTISLSLC). Residues 23–39 (EEERSADEDDGEKGVKR) constitute a propeptide that is removed on maturation. An intrachain disulfide couples cysteine 70 to cysteine 76.

As to expression, expressed by the skin glands.

It localises to the secreted. Its function is as follows. Antimicrobial peptide with activity against Gram-positive and Gram-negative bacteria and against fungi. Has been tested against S.aureus (MIC=1.25 ug/mL), B.pumilus (MIC=2.5 ug/mL), B.cereus (MIC=7.5 ug/mL), E.coli (MIC=12.5 ug/mL), B.dysenteriae (MIC=7.5 ug/mL), A.cacoaceticus (MIC=12.5 ug/mL), P.aeruginosa (MIC=50.0 ug/mL) and C.albicans (MIC=2.5 ug/mL). Also shows a weak hemolytic activity. The sequence is that of Esculentin-2-ALb from Amolops loloensis (Lolokou Sucker Frog).